A 349-amino-acid polypeptide reads, in one-letter code: Phosphate acyltransferase (349 aa).

The protein belongs to the PlsX family. Homodimer. Probably interacts with PlsY.

The protein localises to the cytoplasm. The enzyme catalyses a fatty acyl-[ACP] + phosphate = an acyl phosphate + holo-[ACP]. Its pathway is lipid metabolism; phospholipid metabolism. Catalyzes the reversible formation of acyl-phosphate (acyl-PO(4)) from acyl-[acyl-carrier-protein] (acyl-ACP). This enzyme utilizes acyl-ACP as fatty acyl donor, but not acyl-CoA. This chain is Phosphate acyltransferase, found in Rhodopseudomonas palustris (strain BisA53).